The chain runs to 193 residues: Putative nucleotidase YqfW (193 aa).

Belongs to the 5'(3')-deoxyribonucleotidase family.

This is Putative nucleotidase YqfW (yqfW) from Bacillus subtilis (strain 168).